The sequence spans 276 residues: MATTGDDTLTVTASDYIQHHLTNAKMCSADGGIAFNYACQDAGFWTWHIDSLLFSVGLGVLFLWLFYKVGQKATIGVPGKLQCFVEMCVEGVDKIVKDSFHGKNAVIAPLGLTIFVWVFLMNLMDLIPVDFVPEAAKRFLGVPYLKIVPTTDLNVTLGLALSVFALIVFYSIKVKGIGGFTKELTMQPFNHWALIPINFVLETVTLVAKPISLSLRLFGNLYAGELIFILIALMPWWAQFALSVPWAIFHILVIVLQAFIFMMLTIVYLSMAHEDH.

The next 6 membrane-spanning stretches (helical) occupy residues 47–67, 107–127, 152–172, 188–208, 226–246, and 247–267; these read WHIDSLLFSVGLGVLFLWLFY, IAPLGLTIFVWVFLMNLMDLI, DLNVTLGLALSVFALIVFYSI, PFNHWALIPINFVLETVTLVA, LIFILIALMPWWAQFALSVPW, and AIFHILVIVLQAFIFMMLTIV.

This sequence belongs to the ATPase A chain family. F-type ATPases have 2 components, CF(1) - the catalytic core - and CF(0) - the membrane proton channel. CF(1) has five subunits: alpha(3), beta(3), gamma(1), delta(1), epsilon(1). CF(0) has three main subunits: a(1), b(2) and c(9-12). The alpha and beta chains form an alternating ring which encloses part of the gamma chain. CF(1) is attached to CF(0) by a central stalk formed by the gamma and epsilon chains, while a peripheral stalk is formed by the delta and b chains.

The protein resides in the cell inner membrane. Functionally, key component of the proton channel; it plays a direct role in the translocation of protons across the membrane. The polypeptide is ATP synthase subunit a (Shewanella pealeana (strain ATCC 700345 / ANG-SQ1)).